A 56-amino-acid polypeptide reads, in one-letter code: Large ribosomal subunit protein bL32 (56 aa).

Positions 1–21 are disordered; the sequence is MAVQQNRKTRSRRGMRRSHDA. A compositionally biased stretch (basic residues) spans 7-16; it reads RKTRSRRGMR.

The protein belongs to the bacterial ribosomal protein bL32 family.

In Vibrio cholerae serotype O1 (strain ATCC 39541 / Classical Ogawa 395 / O395), this protein is Large ribosomal subunit protein bL32.